We begin with the raw amino-acid sequence, 243 residues long: Small ribosomal subunit protein uS3 (243 aa).

In terms of domain architecture, KH type-2 spans isoleucine 39 to glutamate 110. Residues glutamine 216–serine 243 are disordered. Residues glutamine 233–serine 243 are compositionally biased toward basic and acidic residues.

This sequence belongs to the universal ribosomal protein uS3 family. As to quaternary structure, part of the 30S ribosomal subunit. Forms a tight complex with proteins S10 and S14.

Its function is as follows. Binds the lower part of the 30S subunit head. Binds mRNA in the 70S ribosome, positioning it for translation. The sequence is that of Small ribosomal subunit protein uS3 from Prochlorococcus marinus (strain AS9601).